The following is an 85-amino-acid chain: Protein RnfH (85 aa).

This sequence belongs to the UPF0125 (RnfH) family.

The polypeptide is Protein RnfH (Cereibacter sphaeroides (strain ATCC 17023 / DSM 158 / JCM 6121 / CCUG 31486 / LMG 2827 / NBRC 12203 / NCIMB 8253 / ATH 2.4.1.) (Rhodobacter sphaeroides)).